Here is a 54-residue protein sequence, read N- to C-terminus: uncharacterized protein (54 aa).

The tract at residues 1 to 54 (MSKKSTPMTKDAASRIQSSAAKSGGDVSSGSFASRAQSAAAINANNTSNSTGKK) is disordered. The segment covering 28–54 (SSGSFASRAQSAAAINANNTSNSTGKK) has biased composition (low complexity).

This is an uncharacterized protein from Dictyostelium discoideum (Social amoeba).